We begin with the raw amino-acid sequence, 366 residues long: Homoserine O-acetyltransferase (366 aa).

An AB hydrolase-1 domain is found at 47–349; that stretch reads NAILICHALS…SGEGHDSFLL (303 aa). S153 serves as the catalytic Nucleophile. R221 is a binding site for substrate. Catalysis depends on residues D311 and H344. Position 345 (D345) interacts with substrate.

This sequence belongs to the AB hydrolase superfamily. MetX family. In terms of assembly, homodimer.

It is found in the cytoplasm. It carries out the reaction L-homoserine + acetyl-CoA = O-acetyl-L-homoserine + CoA. It participates in amino-acid biosynthesis; L-methionine biosynthesis via de novo pathway; O-acetyl-L-homoserine from L-homoserine: step 1/1. Its function is as follows. Transfers an acetyl group from acetyl-CoA to L-homoserine, forming acetyl-L-homoserine. The chain is Homoserine O-acetyltransferase from Leptospira interrogans serogroup Icterohaemorrhagiae serovar copenhageni (strain Fiocruz L1-130).